The following is a 381-amino-acid chain: MPFDHAHWQERFDALRTEHHVPGAALAVFVDGDLHELASGVLHRGTGVAVTTDSVFQSGSVAKVYTATLVMQLVDAGELRLDTRVADVLPGFAVADAEVARTVTIGRLLSHTSGIAGDFTLDTGRGDDCLARFVDACADVGQDCPPDTVISYCSTGYAILGRIVEVLTGQSWDDALRDRLFTPLGLHQSMTLPEEALRFRVAMSHLGELGTDPEPAPVWDMLPRSAGPYGRVLITAADVVRFARMHLDDGVAPDGTRVLSAASAALMRQQVAGCLDTWSFMATGWGHGWALYDWDGVPGYGHDGASGGQFSYLRVVPGSGVVAALLTNGGVATSFFTDLFRELLGELAGVRMPEVFAPPAEPRPIDVAPLAGTYEREGGAP.

Catalysis depends on S60, which acts as the Acyl-ester intermediate. Residues V271 to L291 form a helical membrane-spanning segment. An NAD(+)-binding site is contributed by G299 to G308. The chain crosses the membrane as a helical span at residues V315–F340.

This sequence belongs to the beta-lactamase family.

It is found in the cell membrane. Involved in cell wall biosynthesis and may also act as a sensor of external penicillins. This chain is Penicillin-binding protein 4 (pbp), found in Amycolatopsis lactamdurans (Nocardia lactamdurans).